Consider the following 510-residue polypeptide: Pectinesterase 2 (510 aa).

The first 19 residues, 1-19 (MALRILITVSLVLFSLSHT), serve as a signal peptide directing secretion. Asn-110 and Asn-158 each carry an N-linked (GlcNAc...) asparagine glycan. Thr-275 and Gln-305 together coordinate substrate. Asp-328 acts as the Proton donor in catalysis. Residues Cys-342 and Cys-362 are joined by a disulfide bond. The active-site Nucleophile is Asp-349. N-linked (GlcNAc...) asparagine glycosylation is found at Asn-371 and Asn-385. The substrate site is built by Arg-416 and Trp-418.

In the N-terminal section; belongs to the PMEI family. The protein in the C-terminal section; belongs to the pectinesterase family. As to expression, expressed at low levels in young leaves, young bark, young fruit, mature fruit vesicles, shoots and flower buds, young bark and juice vesicles. In both leaf and fruit abscission zones, and mature leaves, expression was initially undetectable but increased markedly following ethylene treatment.

It is found in the secreted. It localises to the cell wall. The catalysed reaction is [(1-&gt;4)-alpha-D-galacturonosyl methyl ester](n) + n H2O = [(1-&gt;4)-alpha-D-galacturonosyl](n) + n methanol + n H(+). It functions in the pathway glycan metabolism; pectin degradation; 2-dehydro-3-deoxy-D-gluconate from pectin: step 1/5. Acts in the modification of cell walls via demethylesterification of cell wall pectin. The protein is Pectinesterase 2 (PECS-2.1) of Citrus sinensis (Sweet orange).